The primary structure comprises 333 residues: Mitochondrial fission regulator 1 (333 aa).

A mitochondrion-targeting transit peptide spans 1–48 (MLGWIKRLIRMVFQQVGVSMQSVLWSRKPYGSSRSIVRKIGTNLSLIQ). Ser119 is subject to Phosphoserine. Positions 137–169 (NEEALQKICALENELAALRAQIAKIVTQQEQQN) form a coiled coil. Disordered stretches follow at residues 177 to 198 (STTF…PPPA) and 288 to 315 (SDSQ…FGPH). The segment at 179–304 (TFGTIPPHPP…EKGIPKSESE (126 aa)) is necessary and sufficient to promote mitochondrial fission. The segment covering 184-198 (PPHPPPPPPPLPPPA) has biased composition (pro residues). Residues 288-307 (SDSQDEVEKGIPKSESEATS) are compositionally biased toward basic and acidic residues.

This sequence belongs to the MTFR1 family.

It localises to the mitochondrion. Functionally, may play a role in mitochondrial aerobic respiration. May also regulate mitochondrial organization and fission. The polypeptide is Mitochondrial fission regulator 1 (MTFR1) (Homo sapiens (Human)).